Reading from the N-terminus, the 255-residue chain is 5'-nucleotidase SurE (255 aa).

Positions 8, 9, 39, and 95 each coordinate a divalent metal cation.

The protein belongs to the SurE nucleotidase family. The cofactor is a divalent metal cation.

The protein resides in the cytoplasm. It carries out the reaction a ribonucleoside 5'-phosphate + H2O = a ribonucleoside + phosphate. Functionally, nucleotidase that shows phosphatase activity on nucleoside 5'-monophosphates. This chain is 5'-nucleotidase SurE, found in Herpetosiphon aurantiacus (strain ATCC 23779 / DSM 785 / 114-95).